The following is a 508-amino-acid chain: General transcription factor IIF subunit 1 (508 aa).

Position 2 is an N-acetylalanine (Ala2). The residue at position 156 (Thr156) is a Phosphothreonine. Residues 177 to 446 (MQQRRLKDQD…TPSSGDVQVT (270 aa)) are disordered. Ser217, Ser218, Ser221, and Ser224 each carry phosphoserine. Basic residues predominate over residues 232–251 (SKAKKKAPVTKAGRKKKKKK). 2 stretches are compositionally biased toward acidic residues: residues 255–270 (DEAF…EGQE) and 303–325 (EQSE…EEEE). Position 331 is a phosphothreonine (Thr331). A compositionally biased stretch (acidic residues) spans 343–355 (DDSDSSEESDIDS). A compositionally biased stretch (basic residues) spans 364-374 (AKKKTPPKRER). Phosphoserine is present on residues Ser377, Ser380, Ser381, and Ser385. The span at 378-388 (GGSSKGTSRPG) shows a compositional bias: polar residues. Thr389 carries the post-translational modification Phosphothreonine. Residues 389-406 (TPSAEAASTSSTLRAAAS) show a composition bias toward low complexity. Ser391 bears the Phosphoserine mark. Lys407 carries the post-translational modification N6-acetyllysine. Positions 428–443 (GPQSLSGKSTPSSGDV) are enriched in polar residues. Phosphoserine occurs at positions 431, 433, and 436. The residue at position 437 (Thr437) is a Phosphothreonine. Ser440 carries the phosphoserine modification.

The protein belongs to the TFIIF alpha subunit family. As to quaternary structure, heterodimer of an alpha and a beta subunit. Interacts with GTF2F2, CTDP1, TAF6/TAFII80 and URI1. Interacts with GTF2B (via C-terminus and preferentially via acetylated form); this interaction prevents binding of GTF2B to GTF2F2. Part of TBP-based Pol II pre-initiation complex (PIC), in which Pol II core assembles with general transcription factors and other specific initiation factors including GTF2E1, GTF2E2, GTF2F1, GTF2F2, TCEA1, ERCC2, ERCC3, GTF2H2, GTF2H3, GTF2H4, GTF2H5, GTF2A1, GTF2A2, GTF2B and TBP; this large multi-subunit PIC complex mediates DNA unwinding and targets Pol II core to the transcription start site where the first phosphodiester bond forms. In terms of processing, phosphorylated on Ser and other residues by TAF1 and casein kinase II-like kinases.

It localises to the nucleus. Its function is as follows. TFIIF is a general transcription initiation factor that binds to RNA polymerase II and helps to recruit it to the initiation complex in collaboration with TFIIB. It promotes transcription elongation. The chain is General transcription factor IIF subunit 1 (Gtf2f1) from Mus musculus (Mouse).